A 231-amino-acid polypeptide reads, in one-letter code: MQYEVVLPAAGSGKRMGAGQNKLFLKLLKKPILIHTLEVFQQDPFCTGIWLAVKPEERIYIQELLDEYRITKVKGLPNGGAERQHSVHSCMKEMEQVDIVLVHDAARPFITHAIIANLVQSAHDFGAAIAGVRAKDTMKKVRNGVIEETVDRDSLWMIQTPQAFRFDLIVEAEDVAEKVGFLGTDEAMLVERLGHTVHIVESSYENVKMTTQEDLLFGEAILRKRALQLNE.

This sequence belongs to the IspD/TarI cytidylyltransferase family. IspD subfamily.

The catalysed reaction is 2-C-methyl-D-erythritol 4-phosphate + CTP + H(+) = 4-CDP-2-C-methyl-D-erythritol + diphosphate. It participates in isoprenoid biosynthesis; isopentenyl diphosphate biosynthesis via DXP pathway; isopentenyl diphosphate from 1-deoxy-D-xylulose 5-phosphate: step 2/6. Catalyzes the formation of 4-diphosphocytidyl-2-C-methyl-D-erythritol from CTP and 2-C-methyl-D-erythritol 4-phosphate (MEP). The sequence is that of 2-C-methyl-D-erythritol 4-phosphate cytidylyltransferase from Lysinibacillus sphaericus (strain C3-41).